The sequence spans 318 residues: Cobalamin biosynthesis protein CobD (318 aa).

A run of 5 helical transmembrane segments spans residues 51 to 71, 77 to 97, 153 to 173, 206 to 226, and 296 to 316; these read VGGV…AWGA, LVHP…CLAA, DGVI…ALAY, LIPA…AGLS, and MYGA…ILTI.

This sequence belongs to the CobD/CbiB family.

The protein resides in the cell membrane. It functions in the pathway cofactor biosynthesis; adenosylcobalamin biosynthesis. Its function is as follows. Converts cobyric acid to cobinamide by the addition of aminopropanol on the F carboxylic group. This chain is Cobalamin biosynthesis protein CobD, found in Geobacter metallireducens (strain ATCC 53774 / DSM 7210 / GS-15).